The chain runs to 611 residues: MAU2 chromatid cohesion factor homolog (611 aa).

TPR repeat units follow at residues 11 to 46 (YAGLVGLAEGFRTSNPPRIRECIQCLQAILQFNPPP), 91 to 124 (FEASSILSLVYKDQGQYPLAKQVLRQALEITSGE), 131 to 164 (FRLFFQLAEVHACDNEFTASVEVLEMGERIAEQC), 371 to 404 (PILHTLLGLYAMSMNLMEQATTHFNIAFKTADNP), and 490 to 523 (ACSLVLLGHTFLASGNPQEALNMVLPATQLSGKI). The interval 581–611 (WTGAVSPTKSSTIPPQQSFQTWSQPGPSRLS) is disordered. Positions 585–611 (VSPTKSSTIPPQQSFQTWSQPGPSRLS) are enriched in polar residues.

The protein belongs to the SCC4/mau-2 family. In terms of assembly, component of the cohesin loading complex.

It is found in the nucleus. Its subcellular location is the nucleoplasm. In terms of biological role, required for association of the cohesin complex with chromatin during interphase. Plays a role in sister chromatid cohesion and normal progression through prometaphase. This is MAU2 chromatid cohesion factor homolog from Nematostella vectensis (Starlet sea anemone).